A 160-amino-acid chain; its full sequence is Phosphopantetheine adenylyltransferase (160 aa).

Ser-9 provides a ligand contact to substrate. Residues 9–10 (SF) and His-17 contribute to the ATP site. 3 residues coordinate substrate: Lys-41, Thr-73, and Arg-87. ATP is bound by residues 88 to 90 (GMR), Glu-98, and 123 to 129 (YTFFSSS).

The protein belongs to the bacterial CoaD family. In terms of assembly, homohexamer. Mg(2+) serves as cofactor.

It is found in the cytoplasm. The enzyme catalyses (R)-4'-phosphopantetheine + ATP + H(+) = 3'-dephospho-CoA + diphosphate. Its pathway is cofactor biosynthesis; coenzyme A biosynthesis; CoA from (R)-pantothenate: step 4/5. Its function is as follows. Reversibly transfers an adenylyl group from ATP to 4'-phosphopantetheine, yielding dephospho-CoA (dPCoA) and pyrophosphate. This chain is Phosphopantetheine adenylyltransferase, found in Roseiflexus castenholzii (strain DSM 13941 / HLO8).